We begin with the raw amino-acid sequence, 346 residues long: F(420)H(2) dehydrogenase subunit H (346 aa).

8 consecutive transmembrane segments (helical) span residues 18–38 (GIVGLVLIGVIFMGAMGAVWL), 91–111 (IFMLGSVFLMLVALPVGAVFI), 125–145 (ISVLYIEAVSALSIFGIFMVA), 170–190 (PLGITVISVAAMTGSLNIVDI), 196–216 (LHWNIFLQPLGCFVFFVSLMA), 257–277 (ILGSFLVALLFLGGWNVPGFI), 284–304 (GIIVPTGFLIVKVVFVLMVII), and 326–346 (LLPLALLNLVWAVGLGLYLGA).

This sequence belongs to the complex I subunit 1 family. The FPO complex is composed of at least 13 different subunits. FpoA, FpoH, FpoJ, FpoK, FpoL, FpoM and FpoN proteins constitute the membrane sector of the complex.

The protein localises to the cell membrane. It catalyses the reaction methanophenazine + reduced coenzyme F420-(gamma-L-Glu)(n) = dihydromethanophenazine + oxidized coenzyme F420-(gamma-L-Glu)(n) + H(+). Functionally, component of the F(420)H(2) dehydrogenase (FPO complex) which is part of the energy-conserving F(420)H(2):heterodisulfide oxidoreductase system. The membrane-bound electron transfer system of the complex plays an important role in the metabolism of methylotrophic methanogens when the organisms grow on methanol or methylamines. Catalyzes the oxidation of methanophenazine to dihydromethanophenazine. It shuttles electrons from F(420)H(2), via FAD and iron-sulfur (Fe-S) centers, to methanophenazine (an electron carrier in the membrane). It couples the redox reaction to proton translocation (for every two electrons transferred, two hydrogen ions are translocated across the cytoplasmic membrane), and thus conserves the redox energy in a proton gradient. In Methanosarcina barkeri (strain Fusaro / DSM 804), this protein is F(420)H(2) dehydrogenase subunit H.